A 23-amino-acid polypeptide reads, in one-letter code: DSPGGASDTQKQHXVNSXXXKXY.

The interval 1–23 (DSPGGASDTQKQHXVNSXXXKXY) is disordered.

It belongs to the tyrosinase family. Hemocyanin subfamily. In terms of tissue distribution, hemolymph.

The protein localises to the secreted. Its subcellular location is the extracellular space. Hemocyanins are copper-containing oxygen carriers occurring freely dissolved in the hemolymph of many mollusks and arthropods. This is Hemocyanin subunit 1 from Cancer pagurus (Rock crab).